The sequence spans 504 residues: Kinesin light chain 3 (504 aa).

Residues 90-150 (ALSAHVGALE…EEEKRHLEFL (61 aa)) are a coiled coil. The segment at 153–197 (LRQYDPPAESQQSESPPRRDSLASLFPSEEEERKGPEAAGAAAAQ) is disordered. Over residues 158–167 (PPAESQQSES) the composition is skewed to low complexity. S173 is modified (phosphoserine). 5 TPR repeats span residues 207–240 (LRTL…LERS), 249–282 (ATML…REQT), 291–324 (AATL…REKV), 333–366 (AKQL…YEAL), and 375–408 (AKTK…EDLP). Residues 411–438 (LGAPNTGTAGDAEQALRRSSSLSKIRES) form a disordered region. S466 is modified (phosphoserine). The residue at position 498 (T498) is a Phosphothreonine. S502 carries the post-translational modification Phosphoserine.

Belongs to the kinesin light chain family. Oligomer composed of two heavy chains and two light chains. Associates with microtubulin in an ATP-dependent manner. Interacts with KIF5C. Interacts with ODF1. Interacts with LRGUK. Interacts with VDAC2.

It is found in the cytoplasm. The protein localises to the cytoskeleton. The protein resides in the mitochondrion. In terms of biological role, kinesin is a microtubule-associated force-producing protein that may play a role in organelle transport. Plays a role during spermiogenesis in the development of the sperm tail midpiece and in the normal function of spermatozoa. May play a role in the formation of the mitochondrial sheath formation in the developing spermatid midpiece. The protein is Kinesin light chain 3 (KLC3) of Pongo abelii (Sumatran orangutan).